The sequence spans 546 residues: CTP synthase (546 aa).

The segment at 1 to 266 is amidoligase domain; it reads MTTRYIFVTG…DELVVKRFSL (266 aa). CTP is bound at residue Ser14. Ser14 contacts UTP. Residues 15 to 20 and Asp72 contribute to the ATP site; that span reads SLGKGI. Positions 72 and 140 each coordinate Mg(2+). Residues 147 to 149, 187 to 192, and Lys223 contribute to the CTP site; these read DIE and KTKPTQ. UTP is bound by residues 187 to 192 and Lys223; that span reads KTKPTQ. 239–241 contributes to the ATP binding site; sequence KDV. The region spanning 291–542 is the Glutamine amidotransferase type-1 domain; sequence VIGMVGKYIE…VAAASAHQKR (252 aa). Gly352 contacts L-glutamine. Cys379 functions as the Nucleophile; for glutamine hydrolysis in the catalytic mechanism. L-glutamine is bound by residues 380–383, Glu403, and Arg470; that span reads LGMQ. Residues His515 and Glu517 contribute to the active site.

Belongs to the CTP synthase family. In terms of assembly, homotetramer.

It catalyses the reaction UTP + L-glutamine + ATP + H2O = CTP + L-glutamate + ADP + phosphate + 2 H(+). It carries out the reaction L-glutamine + H2O = L-glutamate + NH4(+). The enzyme catalyses UTP + NH4(+) + ATP = CTP + ADP + phosphate + 2 H(+). It participates in pyrimidine metabolism; CTP biosynthesis via de novo pathway; CTP from UDP: step 2/2. Its activity is regulated as follows. Allosterically activated by GTP, when glutamine is the substrate; GTP has no effect on the reaction when ammonia is the substrate. The allosteric effector GTP functions by stabilizing the protein conformation that binds the tetrahedral intermediate(s) formed during glutamine hydrolysis. Inhibited by the product CTP, via allosteric rather than competitive inhibition. Its function is as follows. Catalyzes the ATP-dependent amination of UTP to CTP with either L-glutamine or ammonia as the source of nitrogen. Regulates intracellular CTP levels through interactions with the four ribonucleotide triphosphates. This is CTP synthase from Shewanella oneidensis (strain ATCC 700550 / JCM 31522 / CIP 106686 / LMG 19005 / NCIMB 14063 / MR-1).